The chain runs to 798 residues: Phenylalanine--tRNA ligase beta subunit (798 aa).

Residues 39 to 148 form the tRNA-binding domain; the sequence is GKDLDNVVIG…EDAPIGTEYR (110 aa). The 77-residue stretch at 401-477 folds into the B5 domain; the sequence is PQRAEISLNL…RMYGFDNIEA (77 aa). Asp-455, Asp-461, Glu-464, and Glu-465 together coordinate Mg(2+). An FDX-ACB domain is found at 705–797; the sequence is SKYPEVLRDL…IKDKYNGEIR (93 aa).

This sequence belongs to the phenylalanyl-tRNA synthetase beta subunit family. Type 1 subfamily. In terms of assembly, tetramer of two alpha and two beta subunits. The cofactor is Mg(2+).

It is found in the cytoplasm. The enzyme catalyses tRNA(Phe) + L-phenylalanine + ATP = L-phenylalanyl-tRNA(Phe) + AMP + diphosphate + H(+). This Fusobacterium nucleatum subsp. nucleatum (strain ATCC 25586 / DSM 15643 / BCRC 10681 / CIP 101130 / JCM 8532 / KCTC 2640 / LMG 13131 / VPI 4355) protein is Phenylalanine--tRNA ligase beta subunit.